Consider the following 113-residue polypeptide: Mitochondrial import inner membrane translocase subunit PAM16 like 1 (113 aa).

The N-terminal 48 residues, Met-1–Gly-48, are a transit peptide targeting the mitochondrion. Residues Glu-55–Ala-104 form a J-like region.

The protein belongs to the TIM16/PAM16 family. As to expression, expressed at low levels in seedlings, rosettes and inflorescence.

It localises to the mitochondrion inner membrane. Functionally, regulates ATP-dependent protein translocation into the mitochondrial matrix. This is Mitochondrial import inner membrane translocase subunit PAM16 like 1 from Arabidopsis thaliana (Mouse-ear cress).